The following is a 325-amino-acid chain: Urease accessory protein UreD (325 aa).

Belongs to the UreD family. UreD, UreF and UreG form a complex that acts as a GTP-hydrolysis-dependent molecular chaperone, activating the urease apoprotein by helping to assemble the nickel containing metallocenter of UreC. The UreE protein probably delivers the nickel.

The protein localises to the cytoplasm. Functionally, required for maturation of urease via the functional incorporation of the urease nickel metallocenter. Its function is as follows. Expression of the urease operon increases the likelihood of bacterial survival by contributing to acid resistance in vitro and in vivo in BALB/c mice. Y.enterocolitica enters the body via an oral path and must survive the acidic stomach before being able to colonize the intestinal mucosa. The protein is Urease accessory protein UreD of Yersinia enterocolitica.